The primary structure comprises 136 residues: Protein NrdI (136 aa).

The protein belongs to the NrdI family.

Functionally, probably involved in ribonucleotide reductase function. The protein is Protein NrdI of Salmonella agona (strain SL483).